Here is a 2774-residue protein sequence, read N- to C-terminus: Teneurin-2 (2774 aa).

Residues 1–375 (MDVKDRRHRS…KPSKYCSWKC (375 aa)) enclose the Teneurin N-terminal domain. At 1–379 (MDVKDRRHRS…YCSWKCAALS (379 aa)) the chain is on the cytoplasmic side. Phosphoserine is present on residues Ser90 and Ser124. The interval 111–271 (TGSDADSDTE…HHHSSANSLN (161 aa)) is disordered. Over residues 141–155 (SSGLSSRENSALTLT) the composition is skewed to polar residues. Thr155 carries the phosphothreonine modification. Residue Ser157 is modified to Phosphoserine. Positions 159-168 (NENKSDDENG) are enriched in basic and acidic residues. Over residues 176 to 188 (SPSLLPSAQLPSS) the composition is skewed to low complexity. Over residues 202–211 (DSNTSHQIMD) the composition is skewed to polar residues. The span at 229 to 240 (SGPQQASSSGPP) shows a compositional bias: low complexity. A helical transmembrane segment spans residues 380–400 (AIAAALLLAILLAYFIAMHLL). At 401 to 2774 (GLNWQLQPAD…FLRQNEMGKR (2374 aa)) the chain is on the extracellular side. Asn443 and Asn482 each carry an N-linked (GlcNAc...) asparagine glycan. EGF-like domains are found at residues 575 to 603 (DCPRNCHGNGECVSGVCHCFPGFLGADCA), 598 to 634 (LGADCAKAACPVLCSGNGQYSKGTCQCYSGWKGAECD), 636 to 668 (PMNQCIDPSCGGHGSCIDGNCVCSAGYKGEHCE), 669 to 701 (EVDCLDPTCSSHGVCVNGECLCSPGWGGLNCEL), 702 to 735 (ARVQCPDQCSGHGTYLPDTGLCSCDPNWMGPDCS), 738 to 766 (VCSVDCGTHGVCIGGACRCEEGWTGAACD), 769 to 797 (VCHPRCIEHGTCKDGKCECREGWNGEHCT), and 808 to 841 (DGCPDLCNGNGRCTLGQNSWQCVCQTGWRGPGCN). Cystine bridges form between Cys576–Cys586, Cys580–Cys591, Cys593–Cys602, Cys611–Cys622, Cys624–Cys633, Cys640–Cys651, Cys645–Cys656, Cys658–Cys667, Cys672–Cys683, Cys677–Cys688, Cys690–Cys699, Cys710–Cys723, Cys725–Cys734, Cys739–Cys749, Cys743–Cys754, Cys756–Cys765, Cys770–Cys780, Cys774–Cys785, Cys787–Cys796, Cys810–Cys820, Cys814–Cys829, and Cys831–Cys840. N-linked (GlcNAc...) asparagine glycosylation is found at Asn925, Asn948, and Asn1267. NHL repeat units lie at residues 1272-1316 (LELR…VKSL), 1342-1386 (ARCG…NGII), 1401-1452 (LSCD…IAGR), 1474-1501 (LESASAIAISHTGVLYITETDEKKINRL), and 1530-1573 (CYSG…VSKN). The stretch at 1583–1602 (YEAASPGEQELYVFNADGIH) is one YD 1 repeat. N-linked (GlcNAc...) asparagine glycosylation is present at Asn1616. YD repeat units lie at residues 1619 to 1639 (YSTDNDVTELIDNNGNSLKIR), 1682 to 1701 (YDGNTGLLATKSDETGWTTF), and 1702 to 1724 (YDYDHEGRLTNVTRPTGVVTSLH). 5 N-linked (GlcNAc...) asparagine glycosylation sites follow: Asn1712, Asn1749, Asn1773, Asn1807, and Asn1892. 18 YD repeats span residues 1895 to 1914 (YFFNGRLAGLQRGAMSERTD), 1936 to 1954 (YLDKSMVLLLQSQRQYIFE), 1955 to 1975 (YDSSDRLLAVTMPSVARHSMS), 1982 to 1999 (YIRNIYNPPESNASVIFD), 2000 to 2021 (YSDDGRILKTSFLGTGRQVFYK), 2022 to 2039 (YGKLSKLSEIVYDSTAVT), 2042 to 2062 (YDETTGVLKMVNLQSGGFSCT), 2065 to 2085 (YRKIGPLVDKQIYRFSEEGMV), 2093 to 2113 (YHDNSFRIASIKPVISETPLP), 2119 to 2136 (YDEISGKVEHFGKFGVIY), 2137 to 2163 (YDINQIITTAVMTLSKHFDTHGRIKEV), 2165 to 2178 (YEMFRSLMYWMTVQ), 2179 to 2202 (YDSMGRVIKRELKLGPYANTTKYT), 2205 to 2225 (YDGDGQLQSVAVNDRPTWRYS), 2226 to 2246 (YDLNGNLHLLNPGNSVRLMPL), 2248 to 2268 (YDLRDRITRLGDVQYKIDDDG), 2280 to 2300 (YNSKGLLTRAYNKASGWSVQY), and 2302 to 2322 (YDGVGRRASYKTNLGHHLQYF). N-linked (GlcNAc...) asparagine glycosylation occurs at Asn1993. An N-linked (GlcNAc...) asparagine glycan is attached at Asn2197. A glycan (N-linked (GlcNAc...) asparagine) is linked at Asn2337. The stretch at 2348-2389 (YDLQGHLFAMESSSGEEYYVASDNTGTPLAVFSINGLMIKQL) is one YD 23 repeat. Asn2648 carries an N-linked (GlcNAc...) asparagine glycan.

This sequence belongs to the tenascin family. Teneurin subfamily. Homodimer; disulfide-linked. Heterodimer with either TENM1 or TENM3. May also form heterodimer with TENM4. Isoform 2 (C-terminal globular domain) interacts with ADGRL1 isoform 2. Post-translationally, derives from the membrane form by proteolytic processing. In terms of processing, derives from the plasma membrane form by proteolytic cleavage and translocates to the nucleus. Homophilic binding of the C-terminal extracellular domain stimulates its proteolytic cleavage and release in the cytoplasmic. Is subjected to rapid degradation by the proteasome pathway. As to expression, highly expressed in heart, followed by brain, liver, kidney and fetal brain and weakly expressed in lung and testis. No expression was detected in skeletal muscle, pancreas, spleen, ovary and fetal liver.

It localises to the cell membrane. The protein localises to the presynaptic cell membrane. Its subcellular location is the postsynaptic cell membrane. It is found in the endoplasmic reticulum. The protein resides in the golgi apparatus. It localises to the synapse. The protein localises to the cell projection. Its subcellular location is the dendritic spine. It is found in the filopodium. The protein resides in the growth cone. It localises to the nucleus. The protein localises to the PML body. In terms of biological role, involved in neural development, regulating the establishment of proper connectivity within the nervous system. Acts as a ligand of the ADGRL1 and ADGRL3 receptors that are expressed at the surface of adjacent cells. Promotes the formation of filopodia and enlarged growth cone in neuronal cells. Mediates axon guidance and homophilic and heterophilic cell-cell adhesion. May function as a cellular signal transducer. Functionally, acts as a ligand of the ADGRL1 receptor. Mediates axon guidance and heterophilic cell-cell adhesion. Its function is as follows. Induces gene transcription inhibition. This chain is Teneurin-2 (TENM2), found in Homo sapiens (Human).